Reading from the N-terminus, the 224-residue chain is Protein GrpE (224 aa).

The disordered stretch occupies residues 27 to 77 (NQASEDIDQENQSEVVDDTTENEDASEEVYEEDTASEDGSKEKKSFFKKKE). The span at 31–62 (EDIDQENQSEVVDDTTENEDASEEVYEEDTAS) shows a compositional bias: acidic residues.

Belongs to the GrpE family. Homodimer.

It is found in the cytoplasm. Functionally, participates actively in the response to hyperosmotic and heat shock by preventing the aggregation of stress-denatured proteins, in association with DnaK and GrpE. It is the nucleotide exchange factor for DnaK and may function as a thermosensor. Unfolded proteins bind initially to DnaJ; upon interaction with the DnaJ-bound protein, DnaK hydrolyzes its bound ATP, resulting in the formation of a stable complex. GrpE releases ADP from DnaK; ATP binding to DnaK triggers the release of the substrate protein, thus completing the reaction cycle. Several rounds of ATP-dependent interactions between DnaJ, DnaK and GrpE are required for fully efficient folding. In Lachnoclostridium phytofermentans (strain ATCC 700394 / DSM 18823 / ISDg) (Clostridium phytofermentans), this protein is Protein GrpE.